The chain runs to 303 residues: Bifunctional protein FolD (303 aa).

NADP(+)-binding positions include 175 to 177 (GVS) and Ile-243.

It belongs to the tetrahydrofolate dehydrogenase/cyclohydrolase family. Homodimer.

It carries out the reaction (6R)-5,10-methylene-5,6,7,8-tetrahydrofolate + NADP(+) = (6R)-5,10-methenyltetrahydrofolate + NADPH. The enzyme catalyses (6R)-5,10-methenyltetrahydrofolate + H2O = (6R)-10-formyltetrahydrofolate + H(+). It functions in the pathway one-carbon metabolism; tetrahydrofolate interconversion. Catalyzes the oxidation of 5,10-methylenetetrahydrofolate to 5,10-methenyltetrahydrofolate and then the hydrolysis of 5,10-methenyltetrahydrofolate to 10-formyltetrahydrofolate. The chain is Bifunctional protein FolD from Xanthomonas oryzae pv. oryzae (strain PXO99A).